Here is a 229-residue protein sequence, read N- to C-terminus: Sec-independent protein translocase protein TatB (229 aa).

Residues 1–21 (MFDIGFSELLLFGVIALIVLG) traverse the membrane as a helical segment. A disordered region spans residues 90–131 (EFEHSQSQNLKTSDKAASPANQANNDSAIQNNNEPATFSYAY). A compositionally biased stretch (polar residues) spans 108 to 131 (PANQANNDSAIQNNNEPATFSYAY).

Belongs to the TatB family. In terms of assembly, the Tat system comprises two distinct complexes: a TatABC complex, containing multiple copies of TatA, TatB and TatC subunits, and a separate TatA complex, containing only TatA subunits. Substrates initially bind to the TatABC complex, which probably triggers association of the separate TatA complex to form the active translocon.

Its subcellular location is the cell inner membrane. Its function is as follows. Part of the twin-arginine translocation (Tat) system that transports large folded proteins containing a characteristic twin-arginine motif in their signal peptide across membranes. Together with TatC, TatB is part of a receptor directly interacting with Tat signal peptides. TatB may form an oligomeric binding site that transiently accommodates folded Tat precursor proteins before their translocation. This chain is Sec-independent protein translocase protein TatB, found in Psychrobacter arcticus (strain DSM 17307 / VKM B-2377 / 273-4).